Consider the following 298-residue polypeptide: Protoheme IX farnesyltransferase (298 aa).

Transmembrane regions (helical) follow at residues 26-46 (VVSLIVFTAVIGMFLSVPGAV), 52-72 (LLGTIGISLVAGAAAALNCLV), 93-113 (VSVPETLFFLVMVGGLGLFIL), 120-140 (LTMWLTLGTFVGYAIIYTVIL), 148-168 (IVIGGASGAMPPVLGWAAITG), 174-194 (ALLLFLIIFAWTPPHFWALAL), 219-239 (LHVLLYTIILCIATVLPYLTQ), 241-261 (SGLIYLVSVLILDAIFLYYAI), and 278-298 (YSIIYLALLFTALLVDHYFYF).

This sequence belongs to the UbiA prenyltransferase family. Protoheme IX farnesyltransferase subfamily.

The protein resides in the cell inner membrane. The enzyme catalyses heme b + (2E,6E)-farnesyl diphosphate + H2O = Fe(II)-heme o + diphosphate. It participates in porphyrin-containing compound metabolism; heme O biosynthesis; heme O from protoheme: step 1/1. Functionally, converts heme B (protoheme IX) to heme O by substitution of the vinyl group on carbon 2 of heme B porphyrin ring with a hydroxyethyl farnesyl side group. This chain is Protoheme IX farnesyltransferase, found in Nitrosomonas eutropha (strain DSM 101675 / C91 / Nm57).